The following is a 3930-amino-acid chain: Hybrid PKS-NRPS synthetase apdA (3930 aa).

The Ketosynthase family 3 (KS3) domain maps to 2–440 (QDLIAIVGSA…GTNAHAIIEG (439 aa)). Active-site for beta-ketoacyl synthase activity residues include C176, H313, and H361. Positions 557-879 (IFTGQGAQWA…MRRGDNEIEA (323 aa)) are malonyl-CoA:ACP transacylase (MAT) domain. The segment at 948 to 1085 (HELLGRRVPD…GRLIINYGDP (138 aa)) is N-terminal hotdog fold. A dehydratase (DH) domain region spans residues 948–1251 (HELLGRRVPD…SMKSMSEPQP (304 aa)). The PKS/mFAS DH domain occupies 948–1252 (HELLGRRVPD…MKSMSEPQPE (305 aa)). The active-site Proton acceptor; for dehydratase activity is the H980. The segment at 1100-1252 (NVPVDMGRFY…MKSMSEPQPE (153 aa)) is C-terminal hotdog fold. D1159 acts as the Proton donor; for dehydratase activity in catalysis. Positions 1389 to 1588 (QDDMLNRFYM…FSGLDCLAPD (200 aa)) are methyltransferase (MT) domain. The tract at residues 2088–2229 (ATYLLAGMTG…SLASIIGNAA (142 aa)) is ketoreductase (KR) domain. Residues 2326-2403 (AVIPIVQEAF…QICEDAVRQF (78 aa)) enclose the Carrier 1 domain. The residue at position 2363 (S2363) is an O-(pantetheine 4'-phosphoryl)serine. Disordered stretches follow at residues 2414–2433 (VAPNMTEKPETKSHPSSNAT) and 2444–2494 (DAAN…VDAD). The span at 2445-2473 (AANGDYESSSQGDDSRGNSSSSSSHTSPS) shows a compositional bias: low complexity. The condensation (C) domain stretch occupies residues 2509 to 2937 (PASFAQSRLW…SLPVNQLPVT (429 aa)). The segment at 2971 to 3371 (KSFPEETAIK…GTLIFMGRMD (401 aa)) is adenylation (A) (KR) domain. The reductase (RED) domain stretch occupies residues 2971–3371 (KSFPEETAIK…GTLIFMGRMD (401 aa)). Residues 3493-3572 (RHLSLAEGEL…QMARRISRRK (80 aa)) form the Carrier 2 domain. The residue at position 3532 (S3532) is an O-(pantetheine 4'-phosphoryl)serine.

The protein in the C-terminal section; belongs to the NRP synthetase family.

Its pathway is secondary metabolite biosynthesis. Its function is as follows. Hybrid PKS-NRPS synthetase; part of the gene cluster that mediates the biosynthesis of aspyridones. The polyketide-amino acid backbone preaspyridone A is first assembled by the PKS-NRPS hybrid apdA. The assembly of preaspyridone A is initiated by loading of malonyl-CoA onto apdA, followed by decarboxylation to yield the acetyl starter unit. The growing polyketide chain then elongates into a tetraketide. The adpA PKS module catalyzes three Claisen condensations, as well as beta-keto processing and methylation. Alpha-methylation step during polyketide synthesis is a prerequisite and a key checkpoint for chain transfer between PKS and NRPS modules. The downstream NRPS module contains the condensation (C), adenylation (A), and thiolation (T) domains and catalyzes the incorporation of tyrosine via the formation of the L-tyrosinyl-thioester and the amide linkage between L-tyrosinyl-thioester and the tetraketide. The bimodular assembly line is terminated with a reductase (R) domain that facilitates formation and release of the tetramic acid product. Because apdA lacks a designated enoylreductase (ER) domain, the required activity is provided the enoyl reductase apdC. ApdC appears to operate with different stereoselectivity in different PKS cycle. Combined with apdC, apdA is proposed to synthesize preaspyridone A via about 20 enzymatic steps. A number of oxidative steps performed successively by the cytochrome P450 monooxygenases apdE and apdB are required for the conversion of preaspyridone A to aspyridone A. The cytochrome P450 monooxygenase apdE is responsible for the oxidative dephenylation of preaspyridone A. Finally, the predicted FAD-dependent monooxygenase apdD and the acyl-CoA dehydrogenase apdG may be involved in the transformation of aspyridone A into aspyridone B. The protein is Hybrid PKS-NRPS synthetase apdA of Emericella nidulans (strain FGSC A4 / ATCC 38163 / CBS 112.46 / NRRL 194 / M139) (Aspergillus nidulans).